The following is a 448-amino-acid chain: Phosphoglucosamine mutase (448 aa).

The active-site Phosphoserine intermediate is the S100. Positions 100, 240, 242, and 244 each coordinate Mg(2+). At S100 the chain carries Phosphoserine.

It belongs to the phosphohexose mutase family. Mg(2+) serves as cofactor. In terms of processing, activated by phosphorylation.

The enzyme catalyses alpha-D-glucosamine 1-phosphate = D-glucosamine 6-phosphate. Its function is as follows. Catalyzes the conversion of glucosamine-6-phosphate to glucosamine-1-phosphate. The chain is Phosphoglucosamine mutase from Geobacillus thermodenitrificans (strain NG80-2).